The sequence spans 700 residues: MPSDILVVAALGRPFTLGMLYDARNDKLIPGFTLWEDEVIEESTLESSQPSSAFEIIASDSTDDKSSLMDIEASLKASFLGGLVEVGGSAKYLNNQKKFKNQSRVTLQYKATTSFKQLMTNLGTKHVEYSELFENIQATHVVIGILYGANAFFVFDSNKVDSTNVQEIQGQMEAVIKKIPSVEISGKASVQLTGEETDITNSFSCEFHGDFFLTTNPTTFEDAVKTYQQLPQMMGKDNAVPMTVWLVPMVNFYSEAPQLMADSSTPILRKVRNTLEAIVQVQMRCNDALDDPTVNLFTEVQKKLSDFQKICDDHMSKLQATIAKKLFAIRSGDEDESALLNLFEENLQSPFNIESLNMWMEFEEREINVLRSCMDILTKAKPKVIFNQGVLFKGLYDSKVKHALCYVFTNVTKNDVFLNVLNEFLDSPQSRPKKLRPSPKDYWYSYDDIPETMREKAYLFRNLAKEMNNRCVHFFVTAIHNPKQEGAGIHYYRESIQIIDEFTKPYMPGVESIKDRRELQWYDCELTLDPETAHQVLTLSEGNKKAVSGNTKSPTDHLEKFSHFQQVMCTKGLSGRHYWELEWSGYVGAGVTYKGIGRKTSTSDSSLGKNEKSWLFEYSTKSGYQQIHNSKKTRVTVSSTGFKLLGVYLDWPAGTLSFYMVNKAWVTHLHTFHTKFNEAVYPAFLIGDAQQKVNGQIKLL.

Residues 2–264 (PSDILVVAAL…EAPQLMADSS (263 aa)) form a structural MACPF/CDC pore-forming domain region. Residues 265–384 (TPILRKVRNT…DILTKAKPKV (120 aa)) form a structural FAT domain region. The thioredoxin (THX) domain stretch occupies residues 385-514 (IFNQGVLFKG…PYMPGVESIK (130 aa)). One can recognise a B30.2/SPRY domain in the interval 506–700 (YMPGVESIKD…QKVNGQIKLL (195 aa)).

The protein belongs to the SNTX/VTX toxin family. As to quaternary structure, heterodimer of alpha and beta subunits; non-covalently linked. Intrachain disulfide bonds may be present in the heterodimer. In terms of processing, not glycosylated. Expressed by the venom gland.

Its subcellular location is the secreted. In terms of biological role, this lethal (towards mammals) heterodimer induces hemolytic activities due to its ability to form pores in the cell membrane. The pore may be composed of 10 SNTX-alpha/beta heterodimers. The toxin elicits potent hypotension which is endothelium-dependent and appears to be mediated by the nitric oxide pathway and activation of potassium channels. In addition, it displays edema-inducing activities, increases vascular permeability. It also shows myotoxic activities and interferes irreversibly with neuromuscular function. It also induces irreversible platelet aggregation in rabbit or rat but not in human or mouse whole blood. In addition, it has been observed to increase spontaneous quantal acetylcholine release from isolated frog cutaneous pectoris motor endings. The polypeptide is Stonustoxin subunit beta (Synanceia horrida (Estuarine stonefish)).